The primary structure comprises 479 residues: Aspartyl/glutamyl-tRNA(Asn/Gln) amidotransferase subunit B (479 aa).

Belongs to the GatB/GatE family. GatB subfamily. In terms of assembly, heterotrimer of A, B and C subunits.

The enzyme catalyses L-glutamyl-tRNA(Gln) + L-glutamine + ATP + H2O = L-glutaminyl-tRNA(Gln) + L-glutamate + ADP + phosphate + H(+). The catalysed reaction is L-aspartyl-tRNA(Asn) + L-glutamine + ATP + H2O = L-asparaginyl-tRNA(Asn) + L-glutamate + ADP + phosphate + 2 H(+). Allows the formation of correctly charged Asn-tRNA(Asn) or Gln-tRNA(Gln) through the transamidation of misacylated Asp-tRNA(Asn) or Glu-tRNA(Gln) in organisms which lack either or both of asparaginyl-tRNA or glutaminyl-tRNA synthetases. The reaction takes place in the presence of glutamine and ATP through an activated phospho-Asp-tRNA(Asn) or phospho-Glu-tRNA(Gln). The chain is Aspartyl/glutamyl-tRNA(Asn/Gln) amidotransferase subunit B from Streptococcus equi subsp. zooepidemicus (strain MGCS10565).